Here is a 117-residue protein sequence, read N- to C-terminus: Hainantoxin-XV-4 (117 aa).

The N-terminal stretch at 1–20 (MKLCAVIIASLLVCVAVASS) is a signal peptide. Positions 20–55 (SSDNQKEFAQEKEMTREETQSLGEHEKDDEVTGSEE) are disordered. A propeptide spanning residues 21–56 (SDNQKEFAQEKEMTREETQSLGEHEKDDEVTGSEER) is cleaved from the precursor. Basic and acidic residues predominate over residues 23–55 (NQKEFAQEKEMTREETQSLGEHEKDDEVTGSEE). Intrachain disulfides connect Cys-58–Cys-72, Cys-65–Cys-78, Cys-69–Cys-115, and Cys-71–Cys-91.

It belongs to the neurotoxin 03 (Tx2) family. 02 subfamily. HNTX-XV sub-subfamily. As to expression, expressed by the venom gland.

The protein localises to the secreted. Putative ion channel inhibitor. The polypeptide is Hainantoxin-XV-4 (Cyriopagopus hainanus (Chinese bird spider)).